Here is a 262-residue protein sequence, read N- to C-terminus: Taurine import ATP-binding protein TauB (262 aa).

In terms of domain architecture, ABC transporter spans 4–233 (LELERISAQY…RYAAGESARA (230 aa)). An ATP-binding site is contributed by 38 to 45 (GPSGSGKT).

Belongs to the ABC transporter superfamily. Taurine importer (TC 3.A.1.17.1) family. The complex is composed of two ATP-binding proteins (TauB), two transmembrane proteins (TauC) and a solute-binding protein (TauA).

The protein localises to the cell inner membrane. The enzyme catalyses taurine(out) + ATP + H2O = taurine(in) + ADP + phosphate + H(+). Functionally, part of the ABC transporter complex TauABC involved in taurine import. Responsible for energy coupling to the transport system. In Pseudomonas putida (Arthrobacter siderocapsulatus), this protein is Taurine import ATP-binding protein TauB.